We begin with the raw amino-acid sequence, 184 residues long: ATP synthase subunit b, chloroplastic (184 aa).

Residues 27-49 (LATNPINLSVVLGVLIFFGKGVL) form a helical membrane-spanning segment.

It belongs to the ATPase B chain family. In terms of assembly, F-type ATPases have 2 components, F(1) - the catalytic core - and F(0) - the membrane proton channel. F(1) has five subunits: alpha(3), beta(3), gamma(1), delta(1), epsilon(1). F(0) has four main subunits: a(1), b(1), b'(1) and c(10-14). The alpha and beta chains form an alternating ring which encloses part of the gamma chain. F(1) is attached to F(0) by a central stalk formed by the gamma and epsilon chains, while a peripheral stalk is formed by the delta, b and b' chains.

The protein resides in the plastid. It localises to the chloroplast thylakoid membrane. In terms of biological role, f(1)F(0) ATP synthase produces ATP from ADP in the presence of a proton or sodium gradient. F-type ATPases consist of two structural domains, F(1) containing the extramembraneous catalytic core and F(0) containing the membrane proton channel, linked together by a central stalk and a peripheral stalk. During catalysis, ATP synthesis in the catalytic domain of F(1) is coupled via a rotary mechanism of the central stalk subunits to proton translocation. Its function is as follows. Component of the F(0) channel, it forms part of the peripheral stalk, linking F(1) to F(0). This chain is ATP synthase subunit b, chloroplastic, found in Populus alba (White poplar).